The chain runs to 452 residues: Phosphatidylinositol N-acetylglucosaminyltransferase GPI3 subunit (452 aa).

Residues 407–427 traverse the membrane as a helical segment; that stretch reads LYLLCGIVEYMLFFLLEWLYP.

The protein belongs to the glycosyltransferase group 1 family. In terms of assembly, component of the phosphatidylinositol N-acetylglucosaminyltransferase complex composed of at least GPI1, GPI2, GPI3, GPI15, GPI19 and ERI1.

It is found in the endoplasmic reticulum membrane. The catalysed reaction is a 1,2-diacyl-sn-glycero-3-phospho-(1D-myo-inositol) + UDP-N-acetyl-alpha-D-glucosamine = a 6-(N-acetyl-alpha-D-glucosaminyl)-1-(1,2-diacyl-sn-glycero-3-phospho)-1D-myo-inositol + UDP + H(+). It participates in glycolipid biosynthesis; glycosylphosphatidylinositol-anchor biosynthesis. Inhibited by Ras, probably via the interaction between RAS2 and ERI1. Its function is as follows. Catalytic subunit in the complex catalyzing the transfer of N-acetylglucosamine from UDP-N-acetylglucosamine to phosphatidylinositol, the first step of GPI biosynthesis. The chain is Phosphatidylinositol N-acetylglucosaminyltransferase GPI3 subunit (SPT14) from Saccharomyces cerevisiae (strain YJM789) (Baker's yeast).